The primary structure comprises 125 residues: RutC family protein STK_08110 (125 aa).

Belongs to the RutC family.

This chain is RutC family protein STK_08110, found in Sulfurisphaera tokodaii (strain DSM 16993 / JCM 10545 / NBRC 100140 / 7) (Sulfolobus tokodaii).